Consider the following 89-residue polypeptide: Small ribosomal subunit protein uS15 (89 aa).

The protein belongs to the universal ribosomal protein uS15 family. Part of the 30S ribosomal subunit. Forms a bridge to the 50S subunit in the 70S ribosome, contacting the 23S rRNA.

In terms of biological role, one of the primary rRNA binding proteins, it binds directly to 16S rRNA where it helps nucleate assembly of the platform of the 30S subunit by binding and bridging several RNA helices of the 16S rRNA. Its function is as follows. Forms an intersubunit bridge (bridge B4) with the 23S rRNA of the 50S subunit in the ribosome. The polypeptide is Small ribosomal subunit protein uS15 (Mycobacterium bovis (strain ATCC BAA-935 / AF2122/97)).